The chain runs to 282 residues: UDP-N-acetylenolpyruvoylglucosamine reductase (282 aa).

One can recognise an FAD-binding PCMH-type domain in the interval 15 to 179; the sequence is IKSFAKYVYF…LSAEFEFEYK (165 aa). The active site involves arginine 157. The active-site Proton donor is serine 207. Residue glutamate 278 is part of the active site.

This sequence belongs to the MurB family. It depends on FAD as a cofactor.

It localises to the cytoplasm. It catalyses the reaction UDP-N-acetyl-alpha-D-muramate + NADP(+) = UDP-N-acetyl-3-O-(1-carboxyvinyl)-alpha-D-glucosamine + NADPH + H(+). It participates in cell wall biogenesis; peptidoglycan biosynthesis. Cell wall formation. The protein is UDP-N-acetylenolpyruvoylglucosamine reductase of Francisella tularensis subsp. tularensis (strain SCHU S4 / Schu 4).